We begin with the raw amino-acid sequence, 229 residues long: 2,3-bisphosphoglycerate-dependent phosphoglycerate mutase (229 aa).

Substrate contacts are provided by residues 7–14 (RHGQSEWN), 20–21 (TG), R59, 86–89 (ERHY), K97, 113–114 (RR), and 182–183 (GN). H8 acts as the Tele-phosphohistidine intermediate in catalysis. E86 (proton donor/acceptor) is an active-site residue.

The protein belongs to the phosphoglycerate mutase family. BPG-dependent PGAM subfamily.

It catalyses the reaction (2R)-2-phosphoglycerate = (2R)-3-phosphoglycerate. Its pathway is carbohydrate degradation; glycolysis; pyruvate from D-glyceraldehyde 3-phosphate: step 3/5. Functionally, catalyzes the interconversion of 2-phosphoglycerate and 3-phosphoglycerate. This Listeria monocytogenes serovar 1/2a (strain ATCC BAA-679 / EGD-e) protein is 2,3-bisphosphoglycerate-dependent phosphoglycerate mutase.